Reading from the N-terminus, the 318-residue chain is Thioredoxin reductase (318 aa).

36 to 43 (TGLQQGGQ) contacts FAD. A disulfide bridge links C136 with C139. 286 to 295 (DVMDHNYRQA) provides a ligand contact to FAD.

It belongs to the class-II pyridine nucleotide-disulfide oxidoreductase family. As to quaternary structure, homodimer. It depends on FAD as a cofactor.

Its subcellular location is the cytoplasm. The catalysed reaction is [thioredoxin]-dithiol + NADP(+) = [thioredoxin]-disulfide + NADPH + H(+). The protein is Thioredoxin reductase (trxB) of Haemophilus influenzae (strain ATCC 51907 / DSM 11121 / KW20 / Rd).